The chain runs to 536 residues: ATP synthase subunit beta (536 aa).

A disordered region spans residues 1–57 (MVKAVSSSKGAAKVEQKKSAARSGVKKNASKSQASLQDTSSPLKTSSKNAHAKKDVQ). Residues 30 to 49 (SKSQASLQDTSSPLKTSSKN) are compositionally biased toward polar residues. 208–215 (GGAGVGKT) lines the ATP pocket.

This sequence belongs to the ATPase alpha/beta chains family. As to quaternary structure, F-type ATPases have 2 components, CF(1) - the catalytic core - and CF(0) - the membrane proton channel. CF(1) has five subunits: alpha(3), beta(3), gamma(1), delta(1), epsilon(1). CF(0) has three main subunits: a(1), b(2) and c(9-12). The alpha and beta chains form an alternating ring which encloses part of the gamma chain. CF(1) is attached to CF(0) by a central stalk formed by the gamma and epsilon chains, while a peripheral stalk is formed by the delta and b chains.

The protein localises to the cell inner membrane. The catalysed reaction is ATP + H2O + 4 H(+)(in) = ADP + phosphate + 5 H(+)(out). Its function is as follows. Produces ATP from ADP in the presence of a proton gradient across the membrane. The catalytic sites are hosted primarily by the beta subunits. This is ATP synthase subunit beta from Bartonella quintana (strain Toulouse) (Rochalimaea quintana).